A 180-amino-acid chain; its full sequence is ATP synthase subunit delta (180 aa).

It belongs to the ATPase delta chain family. In terms of assembly, F-type ATPases have 2 components, F(1) - the catalytic core - and F(0) - the membrane proton channel. F(1) has five subunits: alpha(3), beta(3), gamma(1), delta(1), epsilon(1). F(0) has three main subunits: a(1), b(2) and c(10-14). The alpha and beta chains form an alternating ring which encloses part of the gamma chain. F(1) is attached to F(0) by a central stalk formed by the gamma and epsilon chains, while a peripheral stalk is formed by the delta and b chains.

It is found in the cell inner membrane. In terms of biological role, f(1)F(0) ATP synthase produces ATP from ADP in the presence of a proton or sodium gradient. F-type ATPases consist of two structural domains, F(1) containing the extramembraneous catalytic core and F(0) containing the membrane proton channel, linked together by a central stalk and a peripheral stalk. During catalysis, ATP synthesis in the catalytic domain of F(1) is coupled via a rotary mechanism of the central stalk subunits to proton translocation. This protein is part of the stalk that links CF(0) to CF(1). It either transmits conformational changes from CF(0) to CF(1) or is implicated in proton conduction. The protein is ATP synthase subunit delta of Paracidovorax citrulli (strain AAC00-1) (Acidovorax citrulli).